Here is a 57-residue protein sequence, read N- to C-terminus: COP9 signalosome complex subunit 9 (57 aa).

Thr26 is subject to Phosphothreonine.

The protein belongs to the CSN9 family. Component of the CSN complex, composed of COPS1/GPS1, COPS2, COPS3, COPS4, COPS5, COPS6, COPS7 (COPS7A or COPS7B), COPS8 and COPS9. In the complex, it interacts directly with COPS3, COPS5 and COPS6.

Its subcellular location is the nucleus. It localises to the cytoplasm. It is found in the nucleoplasm. Component of the COP9 signalosome complex (CSN), a complex involved in various cellular and developmental processes. The CSN complex is an essential regulator of the ubiquitin (Ubl) conjugation pathway by mediating the deneddylation of the cullin subunits of SCF-type E3 ligase complexes, leading to decrease the Ubl ligase activity of SCF-type complexes such as SCF, CSA or DDB2. The complex is also involved in phosphorylation of p53/TP53, c-jun/JUN, IkappaBalpha/NFKBIA, ITPK1 and IRF8/ICSBP, possibly via its association with CK2 and PKD kinases. CSN-dependent phosphorylation of TP53 and JUN promotes and protects degradation by the Ubl system, respectively. Plays a role in cell proliferation. This chain is COP9 signalosome complex subunit 9, found in Mus musculus (Mouse).